The chain runs to 930 residues: RNA-binding protein 10 (930 aa).

Basic and acidic residues-rich tracts occupy residues 1–14 (MEYE…DRTG) and 21–45 (RSQD…RSYP). A disordered region spans residues 1–127 (MEYERRGGRG…EEDEEEEEKA (127 aa)). Residue E2 is modified to N-acetylserine. R30, S61, and S89 each carry phosphoserine. Residues 59-70 (DSSEEQSAEDSY) are compositionally biased toward acidic residues. Over residues 80-89 (RRRRRRHRHS) the composition is skewed to basic residues. Residues 98–111 (RDGDYRDQDYRTEQ) show a composition bias toward basic and acidic residues. Over residues 112 to 125 (GEEEEEEEDEEEEE) the composition is skewed to acidic residues. The 81-residue stretch at 129 to 209 (NIVMLRMLPQ…QKVSMHYSDP (81 aa)) folds into the RRM 1 domain. The RanBP2-type zinc-finger motif lies at 212 to 242 (KINEDWLCNKCGVQNFKRREKCFKCGVPKSE). One can recognise an RRM 2 domain in the interval 300–384 (DTIILRNLNP…KTINVEFAKG (85 aa)). K383 bears the N6-acetyllysine mark. Disordered stretches follow at residues 466–524 (PGIT…AANS), 537–569 (SELQ…VPDV), 620–685 (EQSA…DERR), and 700–753 (KGAL…EEKL). Residues 508-524 (YQQSAEASSSQGTAANS) show a composition bias toward polar residues. Positions 541–557 (SPTHPSSALPPATSPTA) are enriched in low complexity. Composition is skewed to basic and acidic residues over residues 623–639 (ADGH…GKEK), 653–669 (KDME…KENF), and 700–709 (KGALAERQHT). 5 positions are modified to phosphoserine: S718, S723, S733, S736, and S738. Basic and acidic residues predominate over residues 743–753 (ERGGPEREEKL). A C2H2-type; atypical zinc finger spans residues 759 to 784 (LACLLCRRQFPSKEALIRHQQLSGLH). A phosphoserine mark is found at S781 and S797. The segment covering 815–826 (RDRAAERREKYG) has biased composition (basic and acidic residues). The disordered stretch occupies residues 815-861 (RDRAAERREKYGIPEPPEPKRRKYGGISTASVDFEQPTRDGLGSDNI). S845 carries the post-translational modification Phosphoserine. The G-patch domain occupies 858 to 904 (SDNIGSRMLQAMGWKEGSGLGRKKQGIVTPIEAQTRVRGSGLGARGS). R902 carries the post-translational modification Omega-N-methylarginine.

In terms of assembly, associates with the spliceosome. Component of a large chromatin remodeling complex, at least composed of MYSM1, PCAF, RBM10 and KIF11/TRIP5.

It localises to the nucleus. Its function is as follows. Binds to ssRNA containing the consensus sequence 5'-AGGUAA-3'. May be involved in post-transcriptional processing, most probably in mRNA splicing. Binds to RNA homopolymers, with a preference for poly(G) and poly(U) and little for poly(A). May bind to specific miRNA hairpins. This is RNA-binding protein 10 from Homo sapiens (Human).